Consider the following 201-residue polypeptide: Recombination protein RecR (201 aa).

Residues 60–75 (CSCCGNVDTIDPCTVC) form a C4-type zinc finger. One can recognise a Toprim domain in the interval 83–178 (AVIIVVEDVA…RITRLAHGVP (96 aa)).

The protein belongs to the RecR family.

Functionally, may play a role in DNA repair. It seems to be involved in an RecBC-independent recombinational process of DNA repair. It may act with RecF and RecO. In Sinorhizobium medicae (strain WSM419) (Ensifer medicae), this protein is Recombination protein RecR.